The following is a 185-amino-acid chain: Ribosome-recycling factor (185 aa).

It belongs to the RRF family.

The protein localises to the cytoplasm. In terms of biological role, responsible for the release of ribosomes from messenger RNA at the termination of protein biosynthesis. May increase the efficiency of translation by recycling ribosomes from one round of translation to another. The polypeptide is Ribosome-recycling factor (Shewanella woodyi (strain ATCC 51908 / MS32)).